Reading from the N-terminus, the 356-residue chain is Glycerol-1-phosphate dehydrogenase [NAD(P)+] (356 aa).

NAD(+) is bound by residues 103–107 (GRSID) and 125–128 (TAAS). Position 130 (aspartate 130) interacts with substrate. NAD(+) is bound at residue serine 134. Aspartate 177 serves as a coordination point for substrate. Zn(2+)-binding residues include aspartate 177 and histidine 257. A substrate-binding site is contributed by histidine 261. Position 273 (histidine 273) interacts with Zn(2+).

It belongs to the glycerol-1-phosphate dehydrogenase family. Requires Zn(2+) as cofactor.

The protein localises to the cytoplasm. The catalysed reaction is sn-glycerol 1-phosphate + NAD(+) = dihydroxyacetone phosphate + NADH + H(+). It carries out the reaction sn-glycerol 1-phosphate + NADP(+) = dihydroxyacetone phosphate + NADPH + H(+). The protein operates within membrane lipid metabolism; glycerophospholipid metabolism. Its function is as follows. Catalyzes the NAD(P)H-dependent reduction of dihydroxyacetonephosphate (DHAP or glycerone phosphate) to glycerol 1-phosphate (G1P). The G1P thus generated is used as the glycerophosphate backbone of phospholipids in the cellular membranes of Archaea. In Methanosarcina acetivorans (strain ATCC 35395 / DSM 2834 / JCM 12185 / C2A), this protein is Glycerol-1-phosphate dehydrogenase [NAD(P)+].